The chain runs to 572 residues: MAGGAREVLTLQLGHFAGFVGAHWWNQQDAALCRPTDAKEPPGELCPDVLYRTGRTLHGQETYTPRLILMDLKGSLSSLKQEGGLYRDKQLDAAIAWQGKLTTHKEELYPKNPYLQDLLSAEGVLSSDGTWRVKSIPNGKGLPPFTNAITPKPVMPTEGSIRVWSDFLRVHLHPRSICMIHKYNHDGEAGRLEAFGQGESILKEPKYLEELEDRLHFYVEECDYLQGFQILCDLHDGFSGLGAKAAELLQDEYSGRGIITWGLLPGPYRLGELQKNIYRLLNTAFGLVHLSAHSSLVCPLSLGGSLGLRPEPPVSFPLLQYDATLPFHCGAILATALDTVTVPYRLRSSPVSMVHLADMLNFSGKKVVTAGATIPFPSVPSQSLPDTLMQLGEATPWTPLSACGDPSGTCCFAQSVVLRGLDRAHHTSQLAPGTPLPSPLHACATGEEVLAQYLQQQQPRVRSSSHLLLTPCKVVPPYPSLFSSSLSQHGSVLDGLPTGTAVESIPVLGALCSSSSLNRALGDLAKDLSKLDLRRWASFMDAGVEQDDLEETLQDLRSLAQCYEGGDDRLVD.

It belongs to the misato family.

The protein localises to the mitochondrion outer membrane. The protein resides in the cytoplasm. Its function is as follows. Involved in the regulation of mitochondrial distribution and morphology. Required for mitochondrial fusion and mitochondrial network formation. The protein is Protein misato homolog 1 (MSTO1) of Bos taurus (Bovine).